The chain runs to 369 residues: Anthranilate phosphoribosyltransferase (369 aa).

Residues glycine 85, glycine 88–aspartate 89, threonine 93, asparagine 95–threonine 98, lysine 113–serine 121, and serine 125 each bind 5-phospho-alpha-D-ribose 1-diphosphate. Anthranilate is bound at residue glycine 85. Residue serine 97 coordinates Mg(2+). Asparagine 116 lines the anthranilate pocket. Residue arginine 171 participates in anthranilate binding. Residues aspartate 229 and glutamate 230 each contribute to the Mg(2+) site.

It belongs to the anthranilate phosphoribosyltransferase family. In terms of assembly, homodimer. Mg(2+) is required as a cofactor.

The catalysed reaction is N-(5-phospho-beta-D-ribosyl)anthranilate + diphosphate = 5-phospho-alpha-D-ribose 1-diphosphate + anthranilate. Its pathway is amino-acid biosynthesis; L-tryptophan biosynthesis; L-tryptophan from chorismate: step 2/5. Catalyzes the transfer of the phosphoribosyl group of 5-phosphorylribose-1-pyrophosphate (PRPP) to anthranilate to yield N-(5'-phosphoribosyl)-anthranilate (PRA). This chain is Anthranilate phosphoribosyltransferase, found in Frankia alni (strain DSM 45986 / CECT 9034 / ACN14a).